A 413-amino-acid polypeptide reads, in one-letter code: Phosphopentomutase (413 aa).

The Mn(2+) site is built by aspartate 11, aspartate 306, histidine 311, aspartate 347, histidine 348, and histidine 359.

This sequence belongs to the phosphopentomutase family. Mn(2+) is required as a cofactor.

Its subcellular location is the cytoplasm. The catalysed reaction is 2-deoxy-alpha-D-ribose 1-phosphate = 2-deoxy-D-ribose 5-phosphate. It catalyses the reaction alpha-D-ribose 1-phosphate = D-ribose 5-phosphate. Its pathway is carbohydrate degradation; 2-deoxy-D-ribose 1-phosphate degradation; D-glyceraldehyde 3-phosphate and acetaldehyde from 2-deoxy-alpha-D-ribose 1-phosphate: step 1/2. Isomerase that catalyzes the conversion of deoxy-ribose 1-phosphate (dRib-1-P) and ribose 1-phosphate (Rib-1-P) to deoxy-ribose 5-phosphate (dRib-5-P) and ribose 5-phosphate (Rib-5-P), respectively. The protein is Phosphopentomutase of Helicobacter pylori (strain P12).